Consider the following 344-residue polypeptide: Transcription factor AIG1 (344 aa).

The bHLH domain maps to 131–180; the sequence is AASKSHSEAERRRRERINTHLAKLRSILPNTTKTDKASLLAEVIQHMKEL. A disordered region spans residues 313-344; sequence NDESNDNNNLEKSSSGGIKRQRTSKMVNRCYN. The segment covering 318–327 has biased composition (low complexity); that stretch reads DNNNLEKSSS.

Homodimer. Interacts with LHW.

The protein localises to the nucleus. In terms of biological role, transcription factor required for MONOPTEROS-dependent root initiation in embryo. Transcriptionally controlled by MONOPTEROS. In Arabidopsis thaliana (Mouse-ear cress), this protein is Transcription factor AIG1 (BHLH32).